An 80-amino-acid chain; its full sequence is UPF0154 protein SaurJH1_1431 (80 aa).

The chain crosses the membrane as a helical span at residues 4-24 (WLAIIFIVAALILGLIGGFLL).

The protein belongs to the UPF0154 family.

The protein resides in the cell membrane. In Staphylococcus aureus (strain JH1), this protein is UPF0154 protein SaurJH1_1431.